A 496-amino-acid chain; its full sequence is Lysosomal Pro-X carboxypeptidase (496 aa).

Residues 1 to 21 (MGRRALLLLLLSFLAPWATIA) form the signal peptide. Residues 22 to 45 (LRPALRALGSLHLPTNPTSLPAVA) constitute a propeptide that is removed on maturation. N47 and N101 each carry an N-linked (GlcNAc...) asparagine glycan. Residue S179 is the Charge relay system of the active site. The segment at 194-334 (HMVVGALAAS…QNIFQALNVY (141 aa)) is SKS domain. Intrachain disulfides connect C215–C372, C233–C310, C264–C343, and C364–C394. 3 N-linked (GlcNAc...) asparagine glycosylation sites follow: N317, N336, and N345. N-linked (GlcNAc...) asparagine glycosylation occurs at N415. Catalysis depends on charge relay system residues D430 and H455.

This sequence belongs to the peptidase S28 family. Homodimer. In terms of tissue distribution, highest levels in placenta, lung and liver. Also present in heart, brain, pancreas and kidney.

The protein resides in the lysosome. The catalysed reaction is Cleavage of a -Pro-|-Xaa bond to release a C-terminal amino acid.. Its function is as follows. Cleaves C-terminal amino acids linked to proline in peptides such as angiotensin II, III and des-Arg9-bradykinin. This cleavage occurs at acidic pH, but enzymatic activity is retained with some substrates at neutral pH. The polypeptide is Lysosomal Pro-X carboxypeptidase (PRCP) (Homo sapiens (Human)).